Here is a 324-residue protein sequence, read N- to C-terminus: NADH-ubiquinone oxidoreductase chain 1 (324 aa).

The next 8 membrane-spanning stretches (helical) occupy residues 9 to 29, 75 to 95, 106 to 126, 146 to 166, 177 to 197, 228 to 248, 259 to 279, and 299 to 319; these read LINP…LTLI, FLFL…WAPM, LGIL…LGSG, ISYE…SGGY, SIWL…STLA, LFFL…AVLF, ELTT…FLWV, and FLPL…ALAG.

Belongs to the complex I subunit 1 family.

The protein localises to the mitochondrion inner membrane. It catalyses the reaction a ubiquinone + NADH + 5 H(+)(in) = a ubiquinol + NAD(+) + 4 H(+)(out). In terms of biological role, core subunit of the mitochondrial membrane respiratory chain NADH dehydrogenase (Complex I) that is believed to belong to the minimal assembly required for catalysis. Complex I functions in the transfer of electrons from NADH to the respiratory chain. The immediate electron acceptor for the enzyme is believed to be ubiquinone. This is NADH-ubiquinone oxidoreductase chain 1 (MT-ND1) from Carassius auratus (Goldfish).